We begin with the raw amino-acid sequence, 363 residues long: 3-dehydroquinate synthase (363 aa).

NAD(+)-binding positions include 134–135, Lys-147, Lys-156, and 174–177; these read TT and TLIT. Glu-189, His-254, and His-271 together coordinate Zn(2+).

The protein belongs to the sugar phosphate cyclases superfamily. Dehydroquinate synthase family. It depends on NAD(+) as a cofactor. Co(2+) serves as cofactor. Requires Zn(2+) as cofactor.

The protein resides in the cytoplasm. It catalyses the reaction 7-phospho-2-dehydro-3-deoxy-D-arabino-heptonate = 3-dehydroquinate + phosphate. It participates in metabolic intermediate biosynthesis; chorismate biosynthesis; chorismate from D-erythrose 4-phosphate and phosphoenolpyruvate: step 2/7. Catalyzes the conversion of 3-deoxy-D-arabino-heptulosonate 7-phosphate (DAHP) to dehydroquinate (DHQ). The polypeptide is 3-dehydroquinate synthase (Prochlorococcus marinus subsp. pastoris (strain CCMP1986 / NIES-2087 / MED4)).